Reading from the N-terminus, the 291-residue chain is Cell division control protein 2 homolog 1 (291 aa).

The Protein kinase domain occupies 1–284 (GENVEKIGEG…ARSAVEHEYF (284 aa)). Residues 7 to 15 (IGEGTYGVV) and K30 contribute to the ATP site. The residue at position 11 (T11) is a Phosphothreonine. Phosphotyrosine is present on Y12. Residue D124 is the Proton acceptor of the active site. T158 bears the Phosphothreonine; by CAK mark.

It belongs to the protein kinase superfamily. CMGC Ser/Thr protein kinase family. CDC2/CDKX subfamily. As to expression, found in most organs including root, young leaf, stem, vegetative meristem and flower bud.

It carries out the reaction L-seryl-[protein] + ATP = O-phospho-L-seryl-[protein] + ADP + H(+). The enzyme catalyses L-threonyl-[protein] + ATP = O-phospho-L-threonyl-[protein] + ADP + H(+). The catalysed reaction is [DNA-directed RNA polymerase] + ATP = phospho-[DNA-directed RNA polymerase] + ADP + H(+). Its activity is regulated as follows. Phosphorylation at Thr-11 or Tyr-12 inactivates the enzyme, while phosphorylation at Thr-158 activates it. Functionally, plays a key role in the control of the eukaryotic cell cycle. Component of the kinase complex that phosphorylates the repetitive C-terminus of RNA polymerase II. This chain is Cell division control protein 2 homolog 1 (CDC2A), found in Medicago sativa (Alfalfa).